The chain runs to 305 residues: tRNA dimethylallyltransferase 2 (305 aa).

ATP is bound at residue 14–21 (GPTASGKT). 16–21 (TASGKT) is a binding site for substrate. The interval 39-42 (DSRQ) is interaction with substrate tRNA.

Belongs to the IPP transferase family. In terms of assembly, monomer. The cofactor is Mg(2+).

The enzyme catalyses adenosine(37) in tRNA + dimethylallyl diphosphate = N(6)-dimethylallyladenosine(37) in tRNA + diphosphate. In terms of biological role, catalyzes the transfer of a dimethylallyl group onto the adenine at position 37 in tRNAs that read codons beginning with uridine, leading to the formation of N6-(dimethylallyl)adenosine (i(6)A). This Trichlorobacter lovleyi (strain ATCC BAA-1151 / DSM 17278 / SZ) (Geobacter lovleyi) protein is tRNA dimethylallyltransferase 2.